Reading from the N-terminus, the 714-residue chain is MEMASAFTLNVRLDNIAIITIDVPGEKMNTLKAEFASQVRAIIKQLRENKELRGVVFVSAKPDNFIAGADINMIGNCKTAQEAEVLARQGQQLMAEIHALPVPVIAAIHGACLGGGLELALACHGRVCTDDAKTVLGLPEVQLGLLPGSGGTQRLPRLIGVSTALEMILTGKQLRAKQALKLGLVDDVVPQSILLEAAVELAKQDRPSSRPLPVRERILAGPLGRALLFKMVGKKTEHKTQGNYPATERILEVVETGLAQGTSSGYDAEARAFGELAMTPQSQALRNIFFASTEVKKDSGSDAPPAPLNSVGILGGGLMGGGIAYVTACKAGLSVRIKDINPQGINHALKYSWDQLEGKVRRRHLKASERDKQLALISGTTDYCGFAHRDLIIEAVFENLELKQQMVAEVEQNCATHTIFASNTSSLPIGDIAAHAARPEQVIGLHFFSPVEKMPLVEIIPHASTSAQTIATTVKLAKKQGKTPIVVRDKAGFYVNRILAPYINEAIRMLTEGERIEHIDAALVKFGFPVGPIQLLDEVGIDTGTKIIPVLEAAYGERFSAPANVVSSILNDDRKGRKNGRGFYLYGQKGRKSKKQVDPAIYPLIGAQGQGRLSAPQVAERCVMLMLNEAVRCLDEQVIRSVRDGDIGAVFGIGFPPFLGGPFRYIDSLGAGEVVAIMQRLATQYGSRFTPCERLVEMSKRGESFWKTTATDLQ.

Positions 1–190 (MEMASAFTLN…KLGLVDDVVP (190 aa)) are enoyl-CoA hydratase. Residues 306 to 714 (APLNSVGILG…FWKTTATDLQ (409 aa)) are 3-hydroxyacyl-CoA dehydrogenase.

The protein in the N-terminal section; belongs to the enoyl-CoA hydratase/isomerase family. This sequence in the central section; belongs to the 3-hydroxyacyl-CoA dehydrogenase family. As to quaternary structure, heterotetramer of two alpha chains (FadJ) and two beta chains (FadI).

The protein resides in the cytoplasm. The catalysed reaction is a (3S)-3-hydroxyacyl-CoA = a (2E)-enoyl-CoA + H2O. It catalyses the reaction a 4-saturated-(3S)-3-hydroxyacyl-CoA = a (3E)-enoyl-CoA + H2O. It carries out the reaction a (3S)-3-hydroxyacyl-CoA + NAD(+) = a 3-oxoacyl-CoA + NADH + H(+). The enzyme catalyses (3S)-3-hydroxybutanoyl-CoA = (3R)-3-hydroxybutanoyl-CoA. It functions in the pathway lipid metabolism; fatty acid beta-oxidation. Functionally, catalyzes the formation of a hydroxyacyl-CoA by addition of water on enoyl-CoA. Also exhibits 3-hydroxyacyl-CoA epimerase and 3-hydroxyacyl-CoA dehydrogenase activities. This is Fatty acid oxidation complex subunit alpha from Escherichia coli (strain SMS-3-5 / SECEC).